The following is a 268-amino-acid chain: Phycocyanobilin lyase subunit alpha (268 aa).

Belongs to the CpcE/RpcE/PecE family. CpcE and CpcF associate to form a lyase.

Required for the chromophorylation of the cpcA gene product. The sequence is that of Phycocyanobilin lyase subunit alpha (cpcE) from Picosynechococcus sp. (strain ATCC 27264 / PCC 7002 / PR-6) (Agmenellum quadruplicatum).